Consider the following 739-residue polypeptide: Phosphoribosylformylglycinamidine synthase subunit PurL (739 aa).

Residue His53 is part of the active site. 2 residues coordinate ATP: Tyr56 and Lys95. Glu97 provides a ligand contact to Mg(2+). Substrate is bound by residues 98–101 (SHNH) and Arg120. Catalysis depends on His99, which acts as the Proton acceptor. Asp121 is a binding site for Mg(2+). Position 244 (Gln244) interacts with substrate. Residue Asp274 coordinates Mg(2+). 318-320 (ESQ) contacts substrate. Positions 501 and 538 each coordinate ATP. Residue Asn539 coordinates Mg(2+). Substrate is bound at residue Ser541.

The protein belongs to the FGAMS family. As to quaternary structure, monomer. Part of the FGAM synthase complex composed of 1 PurL, 1 PurQ and 2 PurS subunits.

It localises to the cytoplasm. It catalyses the reaction N(2)-formyl-N(1)-(5-phospho-beta-D-ribosyl)glycinamide + L-glutamine + ATP + H2O = 2-formamido-N(1)-(5-O-phospho-beta-D-ribosyl)acetamidine + L-glutamate + ADP + phosphate + H(+). Its pathway is purine metabolism; IMP biosynthesis via de novo pathway; 5-amino-1-(5-phospho-D-ribosyl)imidazole from N(2)-formyl-N(1)-(5-phospho-D-ribosyl)glycinamide: step 1/2. Part of the phosphoribosylformylglycinamidine synthase complex involved in the purines biosynthetic pathway. Catalyzes the ATP-dependent conversion of formylglycinamide ribonucleotide (FGAR) and glutamine to yield formylglycinamidine ribonucleotide (FGAM) and glutamate. The FGAM synthase complex is composed of three subunits. PurQ produces an ammonia molecule by converting glutamine to glutamate. PurL transfers the ammonia molecule to FGAR to form FGAM in an ATP-dependent manner. PurS interacts with PurQ and PurL and is thought to assist in the transfer of the ammonia molecule from PurQ to PurL. In Listeria welshimeri serovar 6b (strain ATCC 35897 / DSM 20650 / CCUG 15529 / CIP 8149 / NCTC 11857 / SLCC 5334 / V8), this protein is Phosphoribosylformylglycinamidine synthase subunit PurL.